The chain runs to 93 residues: Protein LSO1 (93 aa).

Positions Met-1–Arg-73 are disordered. The stretch at Ala-20–Ala-83 forms a coiled coil. Composition is skewed to basic and acidic residues over residues Gln-25–Ala-49 and Leu-57–Arg-73.

The protein resides in the nucleus. It localises to the cytoplasm. In terms of biological role, likely to play a role in iron homeostasis. The polypeptide is Protein LSO1 (Saccharomyces cerevisiae (strain ATCC 204508 / S288c) (Baker's yeast)).